The primary structure comprises 185 residues: NADH-quinone oxidoreductase subunit B (185 aa).

Residues Cys-64, Cys-65, Cys-129, and Cys-159 each contribute to the [4Fe-4S] cluster site.

This sequence belongs to the complex I 20 kDa subunit family. As to quaternary structure, NDH-1 is composed of 14 different subunits. Subunits NuoB, C, D, E, F, and G constitute the peripheral sector of the complex. [4Fe-4S] cluster is required as a cofactor.

Its subcellular location is the cell inner membrane. The enzyme catalyses a quinone + NADH + 5 H(+)(in) = a quinol + NAD(+) + 4 H(+)(out). NDH-1 shuttles electrons from NADH, via FMN and iron-sulfur (Fe-S) centers, to quinones in the respiratory chain. Couples the redox reaction to proton translocation (for every two electrons transferred, four hydrogen ions are translocated across the cytoplasmic membrane), and thus conserves the redox energy in a proton gradient. This chain is NADH-quinone oxidoreductase subunit B, found in Rhodospirillum rubrum (strain ATCC 11170 / ATH 1.1.1 / DSM 467 / LMG 4362 / NCIMB 8255 / S1).